The chain runs to 390 residues: Magnesium-protoporphyrin IX monomethyl ester [oxidative] cyclase (390 aa).

It belongs to the AcsF family. Fe cation serves as cofactor.

It carries out the reaction Mg-protoporphyrin IX 13-monomethyl ester + 3 NADPH + 3 O2 + 2 H(+) = 3,8-divinyl protochlorophyllide a + 3 NADP(+) + 5 H2O. It participates in porphyrin-containing compound metabolism; chlorophyll biosynthesis (light-independent). Its function is as follows. Catalyzes the formation of the isocyclic ring in chlorophyll biosynthesis. Mediates the cyclase reaction, which results in the formation of divinylprotochlorophyllide (Pchlide) characteristic of all chlorophylls from magnesium-protoporphyrin IX 13-monomethyl ester (MgPMME). The sequence is that of Magnesium-protoporphyrin IX monomethyl ester [oxidative] cyclase from Prochlorococcus marinus (strain MIT 9312).